The following is a 495-amino-acid chain: MKYRDLRDFLSLLEQRGELKRISQPIDPYLEMTEIADRTLRAGGPALLFENPKGYSMPVLCNLFGTAKRVAMGMGQEDVSALRDVGKLLAFLKEPDPPKGFRDLFDKLPKFKQVLNMPTKRLNSAPCQEQVWQGEDVDLSRIPVMHCWPEDAAPLVSWGLTITRGPHKERQNLGIYRQQVLGKNKLIMRWLSHRGGALDYQEWCEAHPGERFPVAVALGADPATILAAVTPVPDTLSEYAFAGLLRGHKTEVVKCLSNDLEVPASAEIVLEGYIEQGDMAPEGPYGDHTGYYNEIDNFPVFTVTHITQRQDAIYHSTYTGRPPDEPAVMGVALNEVFVPILQKQFPEIVDFYLPPEGCSYRLAVVTIKKQYAGHAKRVMMGIWSFLRQFMYTKFVIVCDDDINARDWNDVIWAITTRMDPSRDTVLIENTPIDYLDFASPVSGLGSKMGLDATNKWPAETPREWGRPIKMDEDVRARIDALWDELAIFSDKDAKR.

Position 172 (asparagine 172) interacts with Mn(2+). Residues 175 to 177 (IYR), 189 to 191 (RWL), and 194 to 195 (RG) contribute to the prenylated FMN site. Mn(2+) is bound at residue glutamate 238. Catalysis depends on aspartate 287, which acts as the Proton donor.

The protein belongs to the UbiD family. As to quaternary structure, homohexamer. Prenylated FMN is required as a cofactor. Mn(2+) serves as cofactor.

It is found in the cell membrane. The catalysed reaction is a 4-hydroxy-3-(all-trans-polyprenyl)benzoate + H(+) = a 2-(all-trans-polyprenyl)phenol + CO2. The protein operates within cofactor biosynthesis; ubiquinone biosynthesis. Catalyzes the decarboxylation of 3-octaprenyl-4-hydroxy benzoate to 2-octaprenylphenol, an intermediate step in ubiquinone biosynthesis. The sequence is that of 3-octaprenyl-4-hydroxybenzoate carboxy-lyase from Yersinia pestis bv. Antiqua (strain Angola).